The primary structure comprises 1108 residues: cGMP-inhibited 3',5'-cyclic phosphodiesterase 3B (1108 aa).

Over residues 1 to 11 the composition is skewed to basic and acidic residues; that stretch reads MRKDERERDTP. The disordered stretch occupies residues 1-32; sequence MRKDERERDTPAMRSPPPPPPPATATAASPPE. The interval 1-32 is interaction with RAPGEF3; the sequence is MRKDERERDTPAMRSPPPPPPPATATAASPPE. The segment covering 14–23 has biased composition (pro residues); that stretch reads RSPPPPPPPA. S15 is subject to Phosphoserine. The next 6 helical transmembrane spans lie at 73-93, 114-134, 144-164, 175-195, 204-224, and 231-251; these read AGAR…LLGA, LSLS…CFLT, AGSW…FAAW, AAAA…LTLA, VLVL…LGAL, and LLSC…DHFF. Position 279 is a phosphoserine; by PKB/AKT1 or PKB/AKT2 (S279). Residues S280 and S427 each carry the phosphoserine modification. Positions 405-448 are disordered; sequence DRKLHKGLSSKPSFPTAQLRRSSGASGLLTSEHHSRWDRSGGKR. Residues 414 to 433 show a composition bias toward polar residues; it reads SKPSFPTAQLRRSSGASGLL. Residues 421–445 are interaction with PIK3R6; that stretch reads AQLRRSSGASGLLTSEHHSRWDRSG. The segment covering 435–445 has biased composition (basic and acidic residues); sequence SEHHSRWDRSG. A PDEase domain is found at 633 to 1070; that stretch reads PNIDQEVLLD…KIWKEIIEEE (438 aa). The active-site Proton donor is H719. H719 is an AMP binding site. Residues H723, H803, D804, and D919 each contribute to the Mg(2+) site. Residues D804, D919, and Q970 each contribute to the AMP site. The span at 999 to 1033 shows a compositional bias: acidic residues; that stretch reads EEGDDTESDDDDDDDDDDDDDDDEELDSDDEETED. Positions 999 to 1042 are disordered; that stretch reads EEGDDTESDDDDDDDDDDDDDDDEELDSDDEETEDNLNPKPQRR.

It belongs to the cyclic nucleotide phosphodiesterase family. PDE3 subfamily. As to quaternary structure, homodimer. Interacts with PIK3CG; regulates PDE3B activity and thereby cAMP levels in cells. Interacts with RAPGEF3 and PIK3R6; form a signaling complex that regulates phosphatidylinositol 3-kinase gamma in angiogenesis. Interacts with ABHD15; this interaction regulates PDE3B's stability and expression and, thereby, impacts the antilipolytic action of insulin. The cofactor is Mg(2+). It depends on Mn(2+) as a cofactor. Phosphorylation at Ser-279 mediates insulin-induced activation of PDE3B. In terms of tissue distribution, abundant in adipose tissues.

The protein resides in the membrane. The catalysed reaction is a nucleoside 3',5'-cyclic phosphate + H2O = a nucleoside 5'-phosphate + H(+). The enzyme catalyses 3',5'-cyclic AMP + H2O = AMP + H(+). It catalyses the reaction 3',5'-cyclic GMP + H2O = GMP + H(+). With respect to regulation, inhibited by cGMP. In terms of biological role, cyclic nucleotide phosphodiesterase with a dual-specificity for the second messengers cAMP and cGMP, which are key regulators of many important physiological processes. Regulates angiogenesis by inhibiting the cAMP-dependent guanine nucleotide exchange factor RAPGEF3 and downstream phosphatidylinositol 3-kinase gamma-mediated signaling. Controls cardiac contractility by reducing cAMP concentration in cardiocytes. In Rattus norvegicus (Rat), this protein is cGMP-inhibited 3',5'-cyclic phosphodiesterase 3B.